The sequence spans 887 residues: Collagen alpha-2(I) chain (887 aa).

Positions 1–42 (GPMGIMGPRGPPGASGAPGPQGFQGPPGEPGEPGQTGPAGAR) are enriched in low complexity. Residues 1–887 (GPMGIMGPRG…PGPPGPPGPS (887 aa)) are disordered. The span at 51 to 65 (AGEDGHPGKPGRSGE) shows a compositional bias: basic and acidic residues. 7 stretches are compositionally biased toward low complexity: residues 126-155 (VGAP…SAGP), 170-194 (PVGS…VSGP), 221-236 (PGPV…RGIV), 278-290 (IRGS…IPGA), 368-388 (AGIA…AQGP), 444-455 (PGESGAAGPTGP), and 473-503 (EPGV…IPGP). The segment covering 504–517 (KGEKGEPGIRRDGA) has biased composition (basic and acidic residues). Low complexity-rich tracts occupy residues 518-533 (RGAP…AGAN), 560-580 (VGPA…QPGA), 595-605 (ATGFPGAAGRT), 658-673 (PGPQ…IGIP), 690-720 (EPGP…APGE), and 766-782 (EPGP…VGPR). Residues 791-802 (RGDKGEPGDKGP) show a composition bias toward basic and acidic residues. The span at 872–887 (AGPPGPPGPPGPPGPS) shows a compositional bias: pro residues.

Belongs to the fibrillar collagen family. As to quaternary structure, trimers of one alpha 2(I) and two alpha 1(I) chains. Interacts (via C-terminus) with TMEM131 (via PapD-L domain); the interaction is direct and is involved in assembly and TRAPPIII ER-to-Golgi transport complex-dependent secretion of collagen. In terms of processing, prolines at the third position of the tripeptide repeating unit (G-X-Y) are hydroxylated in some or all of the chains. Forms the fibrils of tendon, ligaments and bones. In bones, the fibrils are mineralized with calcium hydroxyapatite.

It is found in the secreted. The protein localises to the extracellular space. It localises to the extracellular matrix. Functionally, type I collagen is a member of group I collagen (fibrillar forming collagen). This chain is Collagen alpha-2(I) chain, found in Hippopotamus amphibius (Hippopotamus).